Here is a 316-residue protein sequence, read N- to C-terminus: Bifunctional riboflavin kinase/FMN adenylyltransferase (316 aa).

The protein belongs to the RibF family.

The catalysed reaction is riboflavin + ATP = FMN + ADP + H(+). It carries out the reaction FMN + ATP + H(+) = FAD + diphosphate. The protein operates within cofactor biosynthesis; FAD biosynthesis; FAD from FMN: step 1/1. Its pathway is cofactor biosynthesis; FMN biosynthesis; FMN from riboflavin (ATP route): step 1/1. Functionally, catalyzes the phosphorylation of riboflavin to FMN followed by the adenylation of FMN to FAD. The sequence is that of Bifunctional riboflavin kinase/FMN adenylyltransferase (ribC) from Bacillus subtilis (strain 168).